The chain runs to 216 residues: Transmembrane protein 186 (216 aa).

The Mitochondrial matrix portion of the chain corresponds to 1-68 (MAFLLRVVPR…IYRFRAIRAI (68 aa)). Residues 31 to 52 (GDSKRWVGSRSPHSREKSPGTE) are disordered. The chain crosses the membrane as a helical span at residues 69 to 91 (GFLSRLKLAQTAVTVVALPPGFY). At 92 to 103 (CYSQGLMTLSSL) the chain is on the mitochondrial intermembrane side. The chain crosses the membrane as a helical span at residues 104–124 (CLLGGVASFALAMLCWMSHFF). At 125 to 216 (RRLVGILYVN…GTLATLKNSK (92 aa)) the chain is on the mitochondrial matrix side.

The protein belongs to the TMEM186 family. Part of the mitochondrial complex I assembly/MCIA complex that comprises at least the core subunits TMEM126B, NDUFAF1, ECSIT and ACAD9 and complement subunits such as COA1 and TMEM186. Interacts with MT-ND3.

It localises to the mitochondrion inner membrane. Its function is as follows. As part of the MCIA complex, required for efficient assembly of the mitochondrial complex I. The polypeptide is Transmembrane protein 186 (Mus musculus (Mouse)).